The primary structure comprises 328 residues: Fructokinase-2 (328 aa).

It belongs to the carbohydrate kinase PfkB family.

It catalyses the reaction D-fructose + ATP = D-fructose 6-phosphate + ADP + H(+). It functions in the pathway glycan biosynthesis; starch biosynthesis. Functionally, may play an important role in maintaining the flux of carbon towards starch formation. This Solanum habrochaites (Wild tomato) protein is Fructokinase-2 (FRK2).